The primary structure comprises 723 residues: Choline transporter-like protein 4 (723 aa).

At 1 to 36 (MGKKKQEEEQNSSEYGAPAQYDPTFNGPIHKRSCTD) the chain is on the cytoplasmic side. The helical transmembrane segment at 37–57 (IICCVLFMLVITGYMVVGILA) threads the bilayer. Residues 58–245 (WLYGDPRHVL…RIFEDFAKTW (188 aa)) lie on the Extracellular side of the membrane. N-linked (GlcNAc...) asparagine glycans are attached at residues asparagine 71, asparagine 202, asparagine 211, and asparagine 219. Residues 246–266 (QWIVAGLVIAMVVSVLFLLLL) form a helical membrane-spanning segment. Residues 267-269 (RFT) lie on the Cytoplasmic side of the membrane. The helical transmembrane segment at 270-290 (APVLIWILIFGVLAVGAFGIW) threads the bilayer. Over 291–325 (YCYNDYMSLASSNLTFSNVGFTTNVQVYLQVRDTW) the chain is Extracellular. Residue asparagine 303 is glycosylated (N-linked (GlcNAc...) asparagine). Residues 326 to 346 (LAFLIILCIVEAVLILALIFL) form a helical membrane-spanning segment. The Cytoplasmic portion of the chain corresponds to 347–374 (RTRILIAIALIQETSKALGHMMSTLLYP). A helical membrane pass occupies residues 375–395 (VVTFVLLLVCVSYWGITALYL). Topologically, residues 396–464 (ATSGAPIYKV…RNLFNLQIYN (69 aa)) are extracellular. Asparagine 409, asparagine 421, and asparagine 430 each carry an N-linked (GlcNAc...) asparagine glycan. The chain crosses the membrane as a helical span at residues 465 to 485 (VVAFLWCVNFVIALGHCTLAG). The Cytoplasmic portion of the chain corresponds to 486–516 (AFASYYWAFSKPADIPTFPLTQSFMRALRYH). Residues 517–537 (VGSLAFGALILTLVQIVRIIL) form a helical membrane-spanning segment. At 538 to 578 (EYLDHKFKAAQNPCARFLMCCLKCCFWCLEKFIKFINRNAY) the chain is on the extracellular side. Residues 579–599 (IMIAIYGKNFCVSAKNAFFLL) traverse the membrane as a helical segment. Over 600 to 615 (MRNIVRVVVLDKVTDL) the chain is Cytoplasmic. The helical transmembrane segment at 616-636 (LLFFGKLLVVGGIGVLAFFFF) threads the bilayer. At 637–655 (SGRIQLPGNTFQTAALNYY) the chain is on the extracellular side. A helical transmembrane segment spans residues 656–676 (WMPIITVVFGAYLIAHGFFSV). The Cytoplasmic segment spans residues 677 to 723 (YNMGVDTLFLCFLEDLERNDGSAEKPYFMSKNLMKILNKKNKQPKTG).

It belongs to the CTL (choline transporter-like) family.

It localises to the membrane. The protein resides in the apical cell membrane. It catalyses the reaction choline(out) + n H(+)(in) = choline(in) + n H(+)(out). The enzyme catalyses thiamine diphosphate(out) = thiamine diphosphate(in). In terms of biological role, choline transporter that seems to play a role in the choline-acetylcholine system and is required to the efferent innervation of hair cells in the olivocochlear bundle for the maintenance of physiological function of outer hair cells and the protection of hair cells from acoustic injury. Also described as a thiamine pyrophosphate transporter. This is Choline transporter-like protein 4 (slc44a4) from Danio rerio (Zebrafish).